The following is a 339-amino-acid chain: DNA-directed RNA polymerase subunit alpha (339 aa).

The alpha N-terminal domain (alpha-NTD) stretch occupies residues 1-233 (MVREEITGST…DLFLPFLHTE (233 aa)). Residues 264 to 339 (KKGIPLNCIF…IDLPKNKFSL (76 aa)) form an alpha C-terminal domain (alpha-CTD) region.

The protein belongs to the RNA polymerase alpha chain family. As to quaternary structure, in plastids the minimal PEP RNA polymerase catalytic core is composed of four subunits: alpha, beta, beta', and beta''. When a (nuclear-encoded) sigma factor is associated with the core the holoenzyme is formed, which can initiate transcription.

It localises to the plastid. It is found in the chloroplast. The enzyme catalyses RNA(n) + a ribonucleoside 5'-triphosphate = RNA(n+1) + diphosphate. In terms of biological role, DNA-dependent RNA polymerase catalyzes the transcription of DNA into RNA using the four ribonucleoside triphosphates as substrates. The protein is DNA-directed RNA polymerase subunit alpha of Zea mays (Maize).